The following is an 842-amino-acid chain: Elongation factor 2 (842 aa).

Positions 17 to 346 (TNVRNMSVIA…MIVLHLPSPV (330 aa)) constitute a tr-type G domain. Residues 26–33 (AHVDHGKS), 158–161 (NKVD), and 213–215 (SGL) contribute to the GTP site. At lysine 509 the chain carries N6,N6,N6-trimethyllysine; by EFM3; alternate. Lysine 509 carries the post-translational modification N6,N6-dimethyllysine; by EFM3; alternate. Residue lysine 509 is modified to N6-methyllysine; by EFM3; alternate. Serine 579 is subject to Phosphoserine. The residue at position 613 (lysine 613) is an N6,N6-dimethyllysine; by EFM2; alternate. Position 613 is an N6-methyllysine; by EFM2; alternate (lysine 613). Position 699 is a diphthamide (histidine 699). Phosphothreonine occurs at positions 713 and 763. A Glycyl lysine isopeptide (Lys-Gly) (interchain with G-Cter in ubiquitin) cross-link involves residue lysine 841.

Belongs to the TRAFAC class translation factor GTPase superfamily. Classic translation factor GTPase family. EF-G/EF-2 subfamily. Binds to 80S ribosomes. Actively translating ribosomes show mutually exclusive binding of eIF5a (HYP2 or ANB1) and EFT1/eEF2. Interacts with the 40S ribosomal subunit protein RPL9A; the interaction is direct. Interacts with the 60S ribosomal subunit proteins RPL12A; the interaction is direct. Interacts with RPS23A; the interaction is direct. Interacts with 18S rRNA; the interaction is direct. Interacts with 25S rRNA; the interaction is direct. Interacts with RPL0. Interacts with STM1; promoting ribosome inactivation. In terms of processing, (Microbial infection) Diphthamide can be ADP-ribosylated by diphtheria toxin and by Pseudomonas exotoxin A, thus abolishing its function.

The protein localises to the cytoplasm. It catalyses the reaction GTP + H2O = GDP + phosphate + H(+). It functions in the pathway protein biosynthesis; polypeptide chain elongation. Its activity is regulated as follows. Inhibited by fusidic acid and sordarin, which prevent the release of eEF2 from the ribosome after the translocation step. While fusidic acid acts on all eukaryotic eEF2, sordarin specifically binds and inhibits only selected fungal eEF2. Functionally, catalyzes the GTP-dependent ribosomal translocation step during translation elongation. During this step, the ribosome changes from the pre-translocational (PRE) to the post-translocational (POST) state as the newly formed A-site-bound peptidyl-tRNA and P-site-bound deacylated tRNA move to the P and E sites, respectively. Catalyzes the coordinated movement of the two tRNA molecules, the mRNA and conformational changes in the ribosome. The chain is Elongation factor 2 (EFT1) from Saccharomyces cerevisiae (strain ATCC 204508 / S288c) (Baker's yeast).